Reading from the N-terminus, the 208-residue chain is NAD(P)H-hydrate epimerase (208 aa).

Residues 11-208 (MRAKDQFTIN…VIVADDMGTY (198 aa)) enclose the YjeF N-terminal domain. 59-63 (NNGGD) is a binding site for (6S)-NADPHX. 2 residues coordinate K(+): N60 and D122. (6S)-NADPHX-binding positions include 126 to 132 (GIGIDRP), Y137, and D155. S158 is a binding site for K(+).

Belongs to the NnrE/AIBP family. K(+) is required as a cofactor.

The enzyme catalyses (6R)-NADHX = (6S)-NADHX. It catalyses the reaction (6R)-NADPHX = (6S)-NADPHX. Functionally, catalyzes the epimerization of the S- and R-forms of NAD(P)HX, a damaged form of NAD(P)H that is a result of enzymatic or heat-dependent hydration. This is a prerequisite for the S-specific NAD(P)H-hydrate dehydratase to allow the repair of both epimers of NAD(P)HX. The protein is NAD(P)H-hydrate epimerase of Limosilactobacillus fermentum (strain NBRC 3956 / LMG 18251) (Lactobacillus fermentum).